The chain runs to 194 residues: ATP-dependent Clp protease proteolytic subunit (194 aa).

The active-site Nucleophile is S97. Residue H122 is part of the active site.

Belongs to the peptidase S14 family. As to quaternary structure, fourteen ClpP subunits assemble into 2 heptameric rings which stack back to back to give a disk-like structure with a central cavity, resembling the structure of eukaryotic proteasomes.

The protein resides in the cytoplasm. The catalysed reaction is Hydrolysis of proteins to small peptides in the presence of ATP and magnesium. alpha-casein is the usual test substrate. In the absence of ATP, only oligopeptides shorter than five residues are hydrolyzed (such as succinyl-Leu-Tyr-|-NHMec, and Leu-Tyr-Leu-|-Tyr-Trp, in which cleavage of the -Tyr-|-Leu- and -Tyr-|-Trp bonds also occurs).. Functionally, cleaves peptides in various proteins in a process that requires ATP hydrolysis. Has a chymotrypsin-like activity. Plays a major role in the degradation of misfolded proteins. This is ATP-dependent Clp protease proteolytic subunit from Lactobacillus helveticus (strain DPC 4571).